Reading from the N-terminus, the 1189-residue chain is Phosphinothricin tripeptide synthetase PhsB (1189 aa).

One can recognise a Carrier 1 domain in the interval 5–80 (QTDDVVTGRI…ALAKRIRASR (76 aa)). Serine 40 carries the post-translational modification O-(pantetheine 4'-phosphoryl)serine. Disordered stretches follow at residues 75-97 (RIRASRSTAPTASGPPRTAPVDS) and 454-476 (TPDRDGREPGEGPFAREESGGDT). Positions 100 to 541 (TAPLTFQQEP…VALLPLQEPA (442 aa)) are condensation. Residues 455–472 (PDRDGREPGEGPFAREES) are compositionally biased toward basic and acidic residues. An adenylation region spans residues 572 to 969 (AQAHRTPDAV…GREDGQVKLR (398 aa)). The disordered stretch occupies residues 1045 to 1081 (DRVPLTPSGKTDRKALPDPAAGEQPRSGRGAAPGTPA). Positions 1076–1151 (APGTPAEREL…DFALAVVTAQ (76 aa)) constitute a Carrier 2 domain. O-(pantetheine 4'-phosphoryl)serine is present on serine 1111.

It belongs to the NRP synthetase family. Pantetheine 4'-phosphate is required as a cofactor.

The enzyme catalyses holo-[peptidyl-carrier protein] + L-alanine + ATP = L-alanyl-[peptidyl-carrier protein] + AMP + diphosphate. The protein operates within secondary metabolite biosynthesis; bialaphos biosynthesis. Involved in the biosynthesis of phosphinothricin tripeptide (PTT), also known as bialaphos (BA), a natural-product antibiotic and potent herbicide. Adenylates L-alanine and loads it onto a peptidyl carrier domain via a thioester linkage to the phosphopanthetheine moiety. Shows weaker activity with aminobutyric acid and L-serine. The sequence is that of Phosphinothricin tripeptide synthetase PhsB from Streptomyces viridochromogenes (strain DSM 40736 / JCM 4977 / BCRC 1201 / Tue 494).